A 196-amino-acid polypeptide reads, in one-letter code: Transmembrane protein 52 (196 aa).

Positions 1–28 (MAPGPSATQGILLLLPLLPLSQVTLGSA) are cleaved as a signal peptide. A helical transmembrane segment spans residues 47-67 (LWHVGLILLAILLMLLCGVTA). Residues 162 to 196 (EEVAAPSEKTNSLPEALEPETTGGPQEPGPSAQRP) form a disordered region.

It localises to the membrane. This Mus musculus (Mouse) protein is Transmembrane protein 52 (Tmem52).